We begin with the raw amino-acid sequence, 575 residues long: Serine/threonine-protein kinase STY46 (575 aa).

The tract at residues 116–140 (ADLDSTSNDAGHSSPTRKSIHPPPA) is disordered. Positions 118-132 (LDSTSNDAGHSSPTR) are enriched in polar residues. In terms of domain architecture, ACT spans 178–252 (EITFSTEDKP…AKIELQSQSW (75 aa)). Residues 290–543 (LKFGHKIASG…EIIEQLQEIA (254 aa)) enclose the Protein kinase domain. Residues 296–304 (IASGSYGDL) and Lys317 contribute to the ATP site. Asp411 functions as the Proton acceptor in the catalytic mechanism. Phosphothreonine is present on Thr443.

Belongs to the protein kinase superfamily. Ser/Thr protein kinase family. Autophosphorylated on serine and threonine residues. Autophosphorylated at Thr-443.

The protein localises to the cytoplasm. It is found in the cytosol. The enzyme catalyses L-seryl-[protein] + ATP = O-phospho-L-seryl-[protein] + ADP + H(+). The catalysed reaction is L-threonyl-[protein] + ATP = O-phospho-L-threonyl-[protein] + ADP + H(+). With respect to regulation, activated by autophosphorylation at Thr-443. Serine/threonine protein kinase that specifically phosphorylates chloroplast precursor proteins in the cytosol within the cleavable presequences (transit peptides). May be part of a cytosolic regulatory network involved in chloroplast protein import. Does not phosphorylate mitochondrion precursor proteins. Specific for ATP and does not utilize other NTPs. Plays a role in chloroplast biogenesis and differentiation in cotyledons, possibly through phosphorylation of chloroplast preproteins. This chain is Serine/threonine-protein kinase STY46, found in Arabidopsis thaliana (Mouse-ear cress).